We begin with the raw amino-acid sequence, 301 residues long: Porphobilinogen deaminase (301 aa).

S-(dipyrrolylmethanemethyl)cysteine is present on C240.

Belongs to the HMBS family. Monomer. Requires dipyrromethane as cofactor.

The catalysed reaction is 4 porphobilinogen + H2O = hydroxymethylbilane + 4 NH4(+). It functions in the pathway porphyrin-containing compound metabolism; protoporphyrin-IX biosynthesis; coproporphyrinogen-III from 5-aminolevulinate: step 2/4. Tetrapolymerization of the monopyrrole PBG into the hydroxymethylbilane pre-uroporphyrinogen in several discrete steps. The sequence is that of Porphobilinogen deaminase from Clostridioides difficile (strain 630) (Peptoclostridium difficile).